Consider the following 595-residue polypeptide: GRB2-associated-binding protein 3 (595 aa).

The PH domain maps to 5–117 (DTVCMGWLIK…WVHSISQVCN (113 aa)). The interval 295-339 (SGVKELNIMSNTPPPRPPKPSYLSEQRQDQPLLTGHSSNKKPGYT) is disordered. The span at 317-331 (LSEQRQDQPLLTGHS) shows a compositional bias: polar residues. Ser346 carries the post-translational modification Phosphoserine. 2 disordered regions span residues 389–408 (PSAE…SELR) and 418–463 (PMSS…QEHT). Positions 454 to 463 (RNLSTIQEHT) are enriched in polar residues. Position 480 is a phosphoserine (Ser480). Positions 493–513 (STPSEEEEEEEEEEEEEEEEE) are disordered. Positions 496–513 (SEEEEEEEEEEEEEEEEE) are enriched in acidic residues.

This sequence belongs to the GAB family. As to quaternary structure, interacts with PIK3R/p85, SHP2 and GRAP2/MONA. May interact with Grb2. Post-translationally, phosphorylated on tyrosine residue(s) after macrophage colony-stimulating factor (M-CSF) receptor stimulation. As to expression, highly expressed in spleen and thymus and weakly in brain, heart, lung, kidney, uterus, and embryonic stem cells. Also expressed in myeloid and macrophage cell lines.

This chain is GRB2-associated-binding protein 3 (Gab3), found in Mus musculus (Mouse).